The following is a 697-amino-acid chain: Elongation factor G 1 (697 aa).

In terms of domain architecture, tr-type G spans 8–283; sequence ERYRNFGIMA…AVVDFLPSPV (276 aa). GTP-binding positions include 17–24, 81–85, and 135–138; these read AHIDAGKT, DTPGH, and NKMD.

The protein belongs to the TRAFAC class translation factor GTPase superfamily. Classic translation factor GTPase family. EF-G/EF-2 subfamily.

It is found in the cytoplasm. In terms of biological role, catalyzes the GTP-dependent ribosomal translocation step during translation elongation. During this step, the ribosome changes from the pre-translocational (PRE) to the post-translocational (POST) state as the newly formed A-site-bound peptidyl-tRNA and P-site-bound deacylated tRNA move to the P and E sites, respectively. Catalyzes the coordinated movement of the two tRNA molecules, the mRNA and conformational changes in the ribosome. This Anaeromyxobacter dehalogenans (strain 2CP-C) protein is Elongation factor G 1.